Here is a 217-residue protein sequence, read N- to C-terminus: Adenylate kinase (217 aa).

10–15 (GAGKGT) is a binding site for ATP. The NMP stretch occupies residues 30–59 (STGDMLRAQVKAGTALGLEAKKHMDAGGLV). Residues T31, R36, 57–59 (GLV), 85–88 (GFPR), and Q92 contribute to the AMP site. Residues 122–159 (GRRAHLASGRTYHVKFNPPKVEGIDDVTGEPLVQRDDD) are LID. ATP-binding positions include R123 and 132 to 133 (TY). AMP-binding residues include R156 and R167. An ATP-binding site is contributed by G203.

The protein belongs to the adenylate kinase family. In terms of assembly, monomer.

The protein localises to the cytoplasm. The catalysed reaction is AMP + ATP = 2 ADP. It participates in purine metabolism; AMP biosynthesis via salvage pathway; AMP from ADP: step 1/1. Functionally, catalyzes the reversible transfer of the terminal phosphate group between ATP and AMP. Plays an important role in cellular energy homeostasis and in adenine nucleotide metabolism. The protein is Adenylate kinase of Dechloromonas aromatica (strain RCB).